Reading from the N-terminus, the 69-residue chain is Small integral membrane protein 20 (69 aa).

Topologically, residues 1–8 are mitochondrial matrix; sequence MAAARNLR. A helical membrane pass occupies residues 9 to 29; sequence TALIFGGFISMVGAAFYPIYF. Topologically, residues 30 to 69 are mitochondrial intermembrane; the sequence is RPLLRLEEYQKEQAVNRAGIVQEDVQPPGLKVWSDPFGRK. F66 is subject to Phenylalanine amide.

As to quaternary structure, component of the MITRAC (mitochondrial translation regulation assembly intermediate of cytochrome c oxidase complex) complex, the core components of this complex being Coa3/Mitrac12 and Cox14. Interacts with Coa3/Mitrac12 and Cox4i1. Directly interacts with newly synthesized Mt-Co1/Cox1. As to expression, highly expressed in the hypothalamus, substantia nigra reticulata, Edinger-Westphal nucleus, and nucleus of the solitary tract/dorsal motor nucleus of the vagus, the spinal cord, and sensory ganglia (at protein level). Also expressed in the heart, thymus, esophagus, stomach, spleen, lung, pituitary gland, kidney, jejunum, duodenum, ileum, cerebrum, pons, and colon (at protein level). Expressed in preadipocytes and apidocytes (at protein level). Expressed in pancreatic islet cells (at protein level).

It is found in the mitochondrion inner membrane. Its subcellular location is the secreted. Component of the MITRAC (mitochondrial translation regulation assembly intermediate of cytochrome c oxidase complex) complex, that regulates cytochrome c oxidase assembly. Promotes the progression of complex assembly after the association of Mt-Co1/Cox11 with Cox4I1 and Cox6c. Chaperone-like assembly factor required to stabilize newly synthesized Mt-Co1/Cox1 and to prevent its premature turnover. Functionally, peptide involved in a broad spectrum of regulatory functions. Is a ligand for GPR173. As part of the reproductive cycle, it regulates gonadotropin-releasing hormone (GnRH) signaling in the hypothalamus and pituitary gland which augments the release of luteinizing hormone. More specifically, it regulates the expression of transcription factors CEBPB and POU2F1/OCT1 through the cAMP-PKA signaling pathway, which subsequently regulate the expression of GNRHR and KISS1. Plays a protective role in memory retention through activation of GNRHR. Regulates the secretion of AVP by hypothalamic neurons. Plays a role in the transduction of the itch sensation. Induces anxiolytic effects, reducing behavior associated with anxiety. Regulates food intake as well as satiation and satiety by increasing NUCB2 expression in neurons. In the ovary, it regulates follicular growth by stimulating granulosa cell proliferation by increasing the expression of GPR173, CREB1, CYP19A1, KITLG, FSHR, and LHCGR. It also increases the production of estradiol (E2). In the heart, it regulates contractility and relaxation by activating the AKT1-NOS3 and MAPK1-MAPK3 signaling pathways. It also plays a cardioprotective role during ischemia, where it activates the SAFE and RISK pathways. Stimulates the proliferation and differentiation of preadipocytes. In pancreatic islet cells, it induces proliferation of islet cells as well as the production of INS1 and INS2 through activation of the MAPK1-MAPK3 signaling pathways. The sequence is that of Small integral membrane protein 20 from Rattus norvegicus (Rat).